The following is a 503-amino-acid chain: ATP synthase subunit alpha (503 aa).

169–176 (GDRKTGKT) provides a ligand contact to ATP.

This sequence belongs to the ATPase alpha/beta chains family. F-type ATPases have 2 components, CF(1) - the catalytic core - and CF(0) - the membrane proton channel. CF(1) has five subunits: alpha(3), beta(3), gamma(1), delta(1), epsilon(1). CF(0) has three main subunits: a(1), b(2) and c(9-12). The alpha and beta chains form an alternating ring which encloses part of the gamma chain. CF(1) is attached to CF(0) by a central stalk formed by the gamma and epsilon chains, while a peripheral stalk is formed by the delta and b chains.

It localises to the cell membrane. The enzyme catalyses ATP + H2O + 4 H(+)(in) = ADP + phosphate + 5 H(+)(out). Produces ATP from ADP in the presence of a proton gradient across the membrane. The alpha chain is a regulatory subunit. The sequence is that of ATP synthase subunit alpha from Ligilactobacillus salivarius (strain UCC118) (Lactobacillus salivarius).